A 280-amino-acid polypeptide reads, in one-letter code: 4-diphosphocytidyl-2-C-methyl-D-erythritol kinase (280 aa).

Residue K8 is part of the active site. 91–101 is a binding site for ATP; that stretch reads PVAAGLAGGSS. D133 is a catalytic residue.

It belongs to the GHMP kinase family. IspE subfamily.

It catalyses the reaction 4-CDP-2-C-methyl-D-erythritol + ATP = 4-CDP-2-C-methyl-D-erythritol 2-phosphate + ADP + H(+). Its pathway is isoprenoid biosynthesis; isopentenyl diphosphate biosynthesis via DXP pathway; isopentenyl diphosphate from 1-deoxy-D-xylulose 5-phosphate: step 3/6. Its function is as follows. Catalyzes the phosphorylation of the position 2 hydroxy group of 4-diphosphocytidyl-2C-methyl-D-erythritol. The sequence is that of 4-diphosphocytidyl-2-C-methyl-D-erythritol kinase from Clostridium kluyveri (strain NBRC 12016).